We begin with the raw amino-acid sequence, 495 residues long: Cytochrome P450 94C1 (495 aa).

A helical membrane pass occupies residues 2–22 (LLIISFTIVSFFFIIIFSLFH). Residue Cys-439 participates in heme binding.

This sequence belongs to the cytochrome P450 family. Heme serves as cofactor.

The protein resides in the membrane. Its subcellular location is the endoplasmic reticulum membrane. It carries out the reaction a 12-hydroxyjasmonyl-L-alpha-amino acid + 2 reduced [NADPH--hemoprotein reductase] + 2 O2 = a 12-hydroxy-12-oxojasmonyl-L-alpha-amino acid + 2 oxidized [NADPH--hemoprotein reductase] + 3 H2O + 3 H(+). Involved in the oxidation of the plant hormone jasmonoyl-L-isoleucine (JA-Ile), a bioactive phytohormone of the jasmonate-mediated signaling pathway. Converts 12-hydroxy-JA-Ile (12OH-JA-Ile) to the carboxy-derivative 12COOH-JA-Ile. Exerts negative feedback control on JA-Ile levels and plays a role in attenuation of jasmonate responses. Also functions as in-chain fatty acids hydroxylase in vitro. Catalyzes the hydroxylation of 12-hydroxy-jasmonoyl-L-phenylalanine (12OH-JA-Phe) in vitro. Converts 12OH-JA-Phe to the carboxy-derivative 12COOH-JA-Phe. The chain is Cytochrome P450 94C1 from Arabidopsis thaliana (Mouse-ear cress).